The primary structure comprises 360 residues: MTTLLEQRSSANLWHRFGNWITSTENRMYVGWFGVLLIPTALTAAIVFILAFIAAPPVDVDGIREPVSGSLLYGNNIITATVVPTSAAIGLHLYPIWEAASLDEWLYNGGPYQMIVLHFLIAIYAYMGRQWELSYRLGMRPWIPVAFSAPVAAATAVLLIYPIGQGSFSDGMMLGISGTFNFMIVFSPEHNILMHPFHMIGVAGVFGGALFSAMHGSLVTSTLVRETSEVESANTGYKFGQEEETYNIVAAHGYFGRLIFQYASFNNSRSLHFFLAAWPVIGIWFAALGISTMSFNLNGFNFNNSILDHQGRTIDTWADLLNRANLGIEVMHERNAHNFPLDLASGEVQPIALAAPAIAS.

3 helical membrane-spanning segments follow: residues 29–46, 118–133, and 142–156; these read YVGW…TAAI, HFLI…QWEL, and WIPV…AATA. His-118 is a binding site for chlorophyll a. Pheophytin a is bound at residue Tyr-126. Residues Asp-170 and Glu-189 each coordinate [CaMn4O5] cluster. The chain crosses the membrane as a helical span at residues 197–218; sequence FHMIGVAGVFGGALFSAMHGSL. Chlorophyll a is bound at residue His-198. A quinone-binding positions include His-215 and 264–265; that span reads SF. His-215 provides a ligand contact to Fe cation. Residue His-272 participates in Fe cation binding. Residues 274 to 288 traverse the membrane as a helical segment; that stretch reads FLAAWPVIGIWFAAL. The [CaMn4O5] cluster site is built by His-332, Glu-333, Asp-342, and Ala-344. Residues 345–360 constitute a propeptide that is removed on maturation; it reads SGEVQPIALAAPAIAS.

It belongs to the reaction center PufL/M/PsbA/D family. PSII is composed of 1 copy each of membrane proteins PsbA, PsbB, PsbC, PsbD, PsbE, PsbF, PsbH, PsbI, PsbJ, PsbK, PsbL, PsbM, PsbT, PsbX, PsbY, PsbZ, Psb30/Ycf12, peripheral proteins PsbO, CyanoQ (PsbQ), PsbU, PsbV and a large number of cofactors. It forms dimeric complexes. Requires The D1/D2 heterodimer binds P680, chlorophylls that are the primary electron donor of PSII, and subsequent electron acceptors. It shares a non-heme iron and each subunit binds pheophytin, quinone, additional chlorophylls, carotenoids and lipids. D1 provides most of the ligands for the Mn4-Ca-O5 cluster of the oxygen-evolving complex (OEC). There is also a Cl(-1) ion associated with D1 and D2, which is required for oxygen evolution. The PSII complex binds additional chlorophylls, carotenoids and specific lipids. as cofactor. Post-translationally, tyr-161 forms a radical intermediate that is referred to as redox-active TyrZ, YZ or Y-Z. C-terminally processed by CtpA; processing is essential to allow assembly of the oxygen-evolving complex and thus photosynthetic growth.

Its subcellular location is the cellular thylakoid membrane. It carries out the reaction 2 a plastoquinone + 4 hnu + 2 H2O = 2 a plastoquinol + O2. In terms of biological role, photosystem II (PSII) is a light-driven water:plastoquinone oxidoreductase that uses light energy to abstract electrons from H(2)O, generating O(2) and a proton gradient subsequently used for ATP formation. It consists of a core antenna complex that captures photons, and an electron transfer chain that converts photonic excitation into a charge separation. The D1/D2 (PsbA/PsbD) reaction center heterodimer binds P680, the primary electron donor of PSII as well as several subsequent electron acceptors. The chain is Photosystem II protein D1 1 from Trichormus variabilis (strain ATCC 29413 / PCC 7937) (Anabaena variabilis).